We begin with the raw amino-acid sequence, 246 residues long: Probable septum site-determining protein MinC (246 aa).

It belongs to the MinC family. In terms of assembly, interacts with MinD and FtsZ.

Cell division inhibitor that blocks the formation of polar Z ring septums. Rapidly oscillates between the poles of the cell to destabilize FtsZ filaments that have formed before they mature into polar Z rings. Prevents FtsZ polymerization. The chain is Probable septum site-determining protein MinC from Pseudomonas syringae pv. tomato (strain ATCC BAA-871 / DC3000).